The primary structure comprises 366 residues: Carbamoyl phosphate synthase small chain (366 aa).

Positions 1 to 171 (MLERRYLVLE…KTPYVSTGSD (171 aa)) are CPSase. Ser47, Gly221, and Gly223 together coordinate L-glutamine. The Glutamine amidotransferase type-1 domain maps to 173–360 (SVVLLDFGKK…MTMMKEFKEK (188 aa)). Cys248 (nucleophile) is an active-site residue. 5 residues coordinate L-glutamine: Leu249, Gln252, Asn290, Gly292, and Tyr293. Catalysis depends on residues His333 and Glu335.

Belongs to the CarA family. Composed of two chains; the small (or glutamine) chain promotes the hydrolysis of glutamine to ammonia, which is used by the large (or ammonia) chain to synthesize carbamoyl phosphate. Tetramer of heterodimers (alpha,beta)4.

It carries out the reaction hydrogencarbonate + L-glutamine + 2 ATP + H2O = carbamoyl phosphate + L-glutamate + 2 ADP + phosphate + 2 H(+). The catalysed reaction is L-glutamine + H2O = L-glutamate + NH4(+). Its pathway is amino-acid biosynthesis; L-arginine biosynthesis; carbamoyl phosphate from bicarbonate: step 1/1. It participates in pyrimidine metabolism; UMP biosynthesis via de novo pathway; (S)-dihydroorotate from bicarbonate: step 1/3. In terms of biological role, small subunit of the glutamine-dependent carbamoyl phosphate synthetase (CPSase). CPSase catalyzes the formation of carbamoyl phosphate from the ammonia moiety of glutamine, carbonate, and phosphate donated by ATP, constituting the first step of 2 biosynthetic pathways, one leading to arginine and/or urea and the other to pyrimidine nucleotides. The small subunit (glutamine amidotransferase) binds and cleaves glutamine to supply the large subunit with the substrate ammonia. The chain is Carbamoyl phosphate synthase small chain from Staphylococcus haemolyticus (strain JCSC1435).